The chain runs to 199 residues: Chaperone protein TorD (199 aa).

The protein belongs to the TorD/DmsD family. TorD subfamily.

It is found in the cytoplasm. Its function is as follows. Involved in the biogenesis of TorA. Acts on TorA before the insertion of the molybdenum cofactor and, as a result, probably favors a conformation of the apoenzyme that is competent for acquiring the cofactor. This chain is Chaperone protein TorD, found in Escherichia coli O7:K1 (strain IAI39 / ExPEC).